The following is a 189-amino-acid chain: Putative ankyrin repeat protein L38 (189 aa).

The stretch at 108–137 (YGKTPLITAIKSGNCIMVKKLIDYGADFNK) is one ANK repeat.

This chain is Putative ankyrin repeat protein L38, found in Acanthamoeba polyphaga mimivirus (APMV).